Consider the following 170-residue polypeptide: Crossover junction endodeoxyribonuclease RuvC (170 aa).

Residues D11, E71, and D143 contribute to the active site. Positions 11, 71, and 143 each coordinate Mg(2+).

The protein belongs to the RuvC family. As to quaternary structure, homodimer which binds Holliday junction (HJ) DNA. The HJ becomes 2-fold symmetrical on binding to RuvC with unstacked arms; it has a different conformation from HJ DNA in complex with RuvA. In the full resolvosome a probable DNA-RuvA(4)-RuvB(12)-RuvC(2) complex forms which resolves the HJ. Mg(2+) serves as cofactor.

Its subcellular location is the cytoplasm. It catalyses the reaction Endonucleolytic cleavage at a junction such as a reciprocal single-stranded crossover between two homologous DNA duplexes (Holliday junction).. Functionally, the RuvA-RuvB-RuvC complex processes Holliday junction (HJ) DNA during genetic recombination and DNA repair. Endonuclease that resolves HJ intermediates. Cleaves cruciform DNA by making single-stranded nicks across the HJ at symmetrical positions within the homologous arms, yielding a 5'-phosphate and a 3'-hydroxyl group; requires a central core of homology in the junction. The consensus cleavage sequence is 5'-(A/T)TT(C/G)-3'. Cleavage occurs on the 3'-side of the TT dinucleotide at the point of strand exchange. HJ branch migration catalyzed by RuvA-RuvB allows RuvC to scan DNA until it finds its consensus sequence, where it cleaves and resolves the cruciform DNA. This is Crossover junction endodeoxyribonuclease RuvC from Rhizobium rhizogenes (strain K84 / ATCC BAA-868) (Agrobacterium radiobacter).